The sequence spans 241 residues: Lipoprotein-releasing system ATP-binding protein LolD 2 (241 aa).

The ABC transporter domain occupies 6 to 241 (LDAQQLSKSY…YKSYEKSTAV (236 aa)). Residue 43–50 (GASGSGKT) participates in ATP binding.

This sequence belongs to the ABC transporter superfamily. Lipoprotein translocase (TC 3.A.1.125) family. As to quaternary structure, the complex is composed of two ATP-binding proteins (LolD) and two transmembrane proteins (LolC and LolE).

It localises to the cell inner membrane. Functionally, part of the ABC transporter complex LolCDE involved in the translocation of mature outer membrane-directed lipoproteins, from the inner membrane to the periplasmic chaperone, LolA. Responsible for the formation of the LolA-lipoprotein complex in an ATP-dependent manner. In Chlorobium chlorochromatii (strain CaD3), this protein is Lipoprotein-releasing system ATP-binding protein LolD 2.